Consider the following 174-residue polypeptide: Keratin-associated protein 9-2 (174 aa).

A run of 17 repeats spans residues 8-12 (CCQPT), 13-17 (CCRTT), 18-22 (CCRTT), 37-41 (CCQPA), 42-46 (CCVSS), 51-55 (CCRPT), 61-65 (CCRTT), 66-70 (CCQPT), 75-79 (CCQPS), 80-84 (CCSTP), 85-89 (CCQPT), 90-94 (CCGSS), 95-99 (CCGQT), 144-148 (CCRPA), 149-153 (CCETT), 154-158 (CCRTT), and 168-172 (CCQPS). Residues 8-172 (CCQPTCCRTT…TCVSSCCQPS (165 aa)) form a 17 X 5 AA repeats of C-C-[RQVSGE]-[SPTQ]-[TASP] region.

The protein belongs to the KRTAP type 9 family. Interacts with hair keratins.

Its function is as follows. In the hair cortex, hair keratin intermediate filaments are embedded in an interfilamentous matrix, consisting of hair keratin-associated proteins (KRTAP), which are essential for the formation of a rigid and resistant hair shaft through their extensive disulfide bond cross-linking with abundant cysteine residues of hair keratins. The matrix proteins include the high-sulfur and high-glycine-tyrosine keratins. This Homo sapiens (Human) protein is Keratin-associated protein 9-2 (KRTAP9-2).